We begin with the raw amino-acid sequence, 230 residues long: Protein-L-isoaspartate O-methyltransferase (230 aa).

S65 is an active-site residue.

The protein belongs to the methyltransferase superfamily. L-isoaspartyl/D-aspartyl protein methyltransferase family. In terms of assembly, monomer. In terms of tissue distribution, highest contents in seeds.

Its subcellular location is the cytoplasm. The enzyme catalyses [protein]-L-isoaspartate + S-adenosyl-L-methionine = [protein]-L-isoaspartate alpha-methyl ester + S-adenosyl-L-homocysteine. Functionally, catalyzes the methyl esterification of L-isoaspartyl residues in peptides and proteins that result from spontaneous decomposition of normal L-aspartyl and L-asparaginyl residues. It plays a role in the repair and/or degradation of damaged proteins. This enzyme does not act on D-aspartyl residues. This Triticum aestivum (Wheat) protein is Protein-L-isoaspartate O-methyltransferase (PCM).